Here is a 97-residue protein sequence, read N- to C-terminus: uncharacterized protein (97 aa).

This is an uncharacterized protein from Mycobacterium tuberculosis (strain CDC 1551 / Oshkosh).